A 393-amino-acid polypeptide reads, in one-letter code: Branched-chain-amino-acid aminotransferase, mitochondrial (393 aa).

Residues 1–27 (MSAAILGQVWTRKLLPIPWRLCVPGRC) constitute a mitochondrion transit peptide. Tyrosine 169 provides a ligand contact to substrate. Position 230 is an N6-(pyridoxal phosphate)lysine (lysine 230). An N6-acetyllysine modification is found at lysine 322.

It belongs to the class-IV pyridoxal-phosphate-dependent aminotransferase family. As to quaternary structure, homodimer. Requires pyridoxal 5'-phosphate as cofactor. Expressed in all tissues.

It localises to the mitochondrion. The enzyme catalyses L-leucine + 2-oxoglutarate = 4-methyl-2-oxopentanoate + L-glutamate. It catalyses the reaction L-isoleucine + 2-oxoglutarate = (S)-3-methyl-2-oxopentanoate + L-glutamate. It carries out the reaction L-valine + 2-oxoglutarate = 3-methyl-2-oxobutanoate + L-glutamate. In terms of biological role, catalyzes the first reaction in the catabolism of the essential branched chain amino acids leucine, isoleucine, and valine. May also function as a transporter of branched chain alpha-keto acids. In Rattus norvegicus (Rat), this protein is Branched-chain-amino-acid aminotransferase, mitochondrial (Bcat2).